The sequence spans 155 residues: Interleukin-2 (155 aa).

The N-terminal stretch at 1-20 (MYKIQLLSCIALTLALVANG) is a signal peptide. An O-linked (GalNAc...) threonine glycan is attached at T23. A disulfide bond links C79 and C127.

Belongs to the IL-2 family.

It is found in the secreted. Its function is as follows. Cytokine produced by activated CD4-positive helper T-cells and to a lesser extend activated CD8-positive T-cells and natural killer (NK) cells that plays pivotal roles in the immune response and tolerance. Binds to a receptor complex composed of either the high-affinity trimeric IL-2R (IL2RA/CD25, IL2RB/CD122 and IL2RG/CD132) or the low-affinity dimeric IL-2R (IL2RB and IL2RG). Interaction with the receptor leads to oligomerization and conformation changes in the IL-2R subunits resulting in downstream signaling starting with phosphorylation of JAK1 and JAK3. In turn, JAK1 and JAK3 phosphorylate the receptor to form a docking site leading to the phosphorylation of several substrates including STAT5. This process leads to activation of several pathways including STAT, phosphoinositide-3-kinase/PI3K and mitogen-activated protein kinase/MAPK pathways. Functions as a T-cell growth factor and can increase NK-cell cytolytic activity as well. Promotes strong proliferation of activated B-cells and subsequently immunoglobulin production. Plays a pivotal role in regulating the adaptive immune system by controlling the survival and proliferation of regulatory T-cells, which are required for the maintenance of immune tolerance. Moreover, participates in the differentiation and homeostasis of effector T-cell subsets, including Th1, Th2, Th17 as well as memory CD8-positive T-cells. The protein is Interleukin-2 (IL2) of Bubalus bubalis (Domestic water buffalo).